The sequence spans 154 residues: Superoxide dismutase [Cu-Zn] (154 aa).

Cu cation is bound by residues His-47, His-49, and His-64. Cys-58 and Cys-147 form a disulfide bridge. 4 residues coordinate Zn(2+): His-64, His-72, His-81, and Asp-84. His-121 provides a ligand contact to Cu cation. Arg-144 lines the substrate pocket.

This sequence belongs to the Cu-Zn superoxide dismutase family. In terms of assembly, homodimer. Cu cation serves as cofactor. It depends on Zn(2+) as a cofactor.

Its subcellular location is the cytoplasm. The catalysed reaction is 2 superoxide + 2 H(+) = H2O2 + O2. Its function is as follows. Destroys radicals which are normally produced within the cells and which are toxic to biological systems. The polypeptide is Superoxide dismutase [Cu-Zn] (sodC) (Aspergillus fumigatus (strain ATCC MYA-4609 / CBS 101355 / FGSC A1100 / Af293) (Neosartorya fumigata)).